Consider the following 283-residue polypeptide: 4-hydroxy-3-methylbut-2-enyl diphosphate reductase (283 aa).

Cys12 is a [4Fe-4S] cluster binding site. (2E)-4-hydroxy-3-methylbut-2-enyl diphosphate is bound by residues His40 and His72. His40 and His72 together coordinate dimethylallyl diphosphate. The isopentenyl diphosphate site is built by His40 and His72. Cys94 lines the [4Fe-4S] cluster pocket. Position 122 (His122) interacts with (2E)-4-hydroxy-3-methylbut-2-enyl diphosphate. His122 contributes to the dimethylallyl diphosphate binding site. Residue His122 participates in isopentenyl diphosphate binding. The active-site Proton donor is the Glu124. Thr160 lines the (2E)-4-hydroxy-3-methylbut-2-enyl diphosphate pocket. Cys188 contributes to the [4Fe-4S] cluster binding site. Positions 216, 218, and 259 each coordinate (2E)-4-hydroxy-3-methylbut-2-enyl diphosphate. The dimethylallyl diphosphate site is built by Ser216, Asn218, and Ser259. Ser216, Asn218, and Ser259 together coordinate isopentenyl diphosphate.

This sequence belongs to the IspH family. The cofactor is [4Fe-4S] cluster.

It carries out the reaction isopentenyl diphosphate + 2 oxidized [2Fe-2S]-[ferredoxin] + H2O = (2E)-4-hydroxy-3-methylbut-2-enyl diphosphate + 2 reduced [2Fe-2S]-[ferredoxin] + 2 H(+). The enzyme catalyses dimethylallyl diphosphate + 2 oxidized [2Fe-2S]-[ferredoxin] + H2O = (2E)-4-hydroxy-3-methylbut-2-enyl diphosphate + 2 reduced [2Fe-2S]-[ferredoxin] + 2 H(+). It functions in the pathway isoprenoid biosynthesis; dimethylallyl diphosphate biosynthesis; dimethylallyl diphosphate from (2E)-4-hydroxy-3-methylbutenyl diphosphate: step 1/1. Its pathway is isoprenoid biosynthesis; isopentenyl diphosphate biosynthesis via DXP pathway; isopentenyl diphosphate from 1-deoxy-D-xylulose 5-phosphate: step 6/6. Its function is as follows. Catalyzes the conversion of 1-hydroxy-2-methyl-2-(E)-butenyl 4-diphosphate (HMBPP) into a mixture of isopentenyl diphosphate (IPP) and dimethylallyl diphosphate (DMAPP). Acts in the terminal step of the DOXP/MEP pathway for isoprenoid precursor biosynthesis. This chain is 4-hydroxy-3-methylbut-2-enyl diphosphate reductase, found in Dictyoglomus thermophilum (strain ATCC 35947 / DSM 3960 / H-6-12).